The chain runs to 359 residues: Aminomethyltransferase (359 aa).

This sequence belongs to the GcvT family. The glycine cleavage system is composed of four proteins: P, T, L and H.

It catalyses the reaction N(6)-[(R)-S(8)-aminomethyldihydrolipoyl]-L-lysyl-[protein] + (6S)-5,6,7,8-tetrahydrofolate = N(6)-[(R)-dihydrolipoyl]-L-lysyl-[protein] + (6R)-5,10-methylene-5,6,7,8-tetrahydrofolate + NH4(+). In terms of biological role, the glycine cleavage system catalyzes the degradation of glycine. In Alcanivorax borkumensis (strain ATCC 700651 / DSM 11573 / NCIMB 13689 / SK2), this protein is Aminomethyltransferase.